A 53-amino-acid polypeptide reads, in one-letter code: UPF0391 membrane protein Patl_1732 (53 aa).

Helical transmembrane passes span 4-24 (WAVI…GGIA) and 28-48 (AGIA…SVVM).

Belongs to the UPF0391 family.

It localises to the cell membrane. This Pseudoalteromonas atlantica (strain T6c / ATCC BAA-1087) protein is UPF0391 membrane protein Patl_1732.